The chain runs to 406 residues: Cysteine desulfurase (406 aa).

At Lys226 the chain carries N6-(pyridoxal phosphate)lysine. The Cysteine persulfide intermediate role is filled by Cys364.

Belongs to the class-V pyridoxal-phosphate-dependent aminotransferase family. Csd subfamily. Homodimer. Interacts with SufE and the SufBCD complex composed of SufB, SufC and SufD. The interaction with SufE is required to mediate the direct transfer of the sulfur atom from the S-sulfanylcysteine. It depends on pyridoxal 5'-phosphate as a cofactor.

It localises to the cytoplasm. It carries out the reaction (sulfur carrier)-H + L-cysteine = (sulfur carrier)-SH + L-alanine. The enzyme catalyses L-selenocysteine + AH2 = hydrogenselenide + L-alanine + A + H(+). It functions in the pathway cofactor biosynthesis; iron-sulfur cluster biosynthesis. In terms of biological role, cysteine desulfurases mobilize the sulfur from L-cysteine to yield L-alanine, an essential step in sulfur metabolism for biosynthesis of a variety of sulfur-containing biomolecules. Component of the suf operon, which is activated and required under specific conditions such as oxidative stress and iron limitation. Acts as a potent selenocysteine lyase in vitro, that mobilizes selenium from L-selenocysteine. Selenocysteine lyase activity is however unsure in vivo. The protein is Cysteine desulfurase of Yersinia pestis bv. Antiqua (strain Angola).